A 184-amino-acid polypeptide reads, in one-letter code: Ribosome-recycling factor (184 aa).

The protein belongs to the RRF family.

The protein resides in the cytoplasm. Its function is as follows. Responsible for the release of ribosomes from messenger RNA at the termination of protein biosynthesis. May increase the efficiency of translation by recycling ribosomes from one round of translation to another. The sequence is that of Ribosome-recycling factor from Stenotrophomonas maltophilia (strain K279a).